The following is a 386-amino-acid chain: uncharacterized protein (386 aa).

N6-(pyridoxal phosphate)lysine is present on Lys185.

Belongs to the DegT/DnrJ/EryC1 family. The cofactor is pyridoxal 5'-phosphate.

This is an uncharacterized protein from Methanocaldococcus jannaschii (strain ATCC 43067 / DSM 2661 / JAL-1 / JCM 10045 / NBRC 100440) (Methanococcus jannaschii).